The following is a 683-amino-acid chain: PTS system mannose-specific EIIBCA component (683 aa).

The 89-residue stretch at 1–89 (MASKLTTTSQ…LKLDGMKHFA (89 aa)) folds into the PTS EIIB type-1 domain. C28 acts as the Phosphocysteine intermediate; for EIIB activity in catalysis. Residues 117–476 (EFLSDTFRPI…NEERDEARAK (360 aa)) form the PTS EIIC type-1 domain. 10 consecutive transmembrane segments (helical) span residues 126–146 (ILWALLGASLIITLLVLADTF), 162–182 (YVFLHSMWRSVFYFLPIMVGA), 193–213 (WIGAAIPAALLTPEFLALGSA), 225–245 (VLNDYSGQVFPPLIAAIGLYW), 260–280 (MVFVPFFSLLIMIPATAFLLG), 303–323 (FILSIVIPLLYPFLVPLGLHW), 344–364 (PMGAWNFACFGLVTGVFLLSI), 376–396 (LGGMLAGLLGGISEPSLYGVL), 409–429 (GCLAGGIVMGIFDIKAYAFVF), and 442–462 (LGYTIGIAVAFFVSMFLVLAL). Residues 550 to 654 (DPIFAAGKLG…PLITPVVVSN (105 aa)) form the PTS EIIA type-1 domain. Catalysis depends on H602, which acts as the Tele-phosphohistidine intermediate; for EIIA activity.

Its subcellular location is the cell membrane. It carries out the reaction D-mannose(out) + N(pros)-phospho-L-histidyl-[protein] = D-mannose 6-phosphate(in) + L-histidyl-[protein]. The phosphoenolpyruvate-dependent sugar phosphotransferase system (sugar PTS), a major carbohydrate active -transport system, catalyzes the phosphorylation of incoming sugar substrates concomitantly with their translocation across the cell membrane. This system is involved in mannose transport. The polypeptide is PTS system mannose-specific EIIBCA component (ptsM) (Corynebacterium glutamicum (strain ATCC 13032 / DSM 20300 / JCM 1318 / BCRC 11384 / CCUG 27702 / LMG 3730 / NBRC 12168 / NCIMB 10025 / NRRL B-2784 / 534)).